The primary structure comprises 79 residues: MORN repeat-containing protein 2 (79 aa).

MORN repeat units follow at residues 15 to 37 and 38 to 60; these read YEGH…NGAK and YTGN…QGLE.

The polypeptide is MORN repeat-containing protein 2 (MORN2) (Bos taurus (Bovine)).